We begin with the raw amino-acid sequence, 130 residues long: Large ribosomal subunit protein bL19 (130 aa).

The protein belongs to the bacterial ribosomal protein bL19 family.

In terms of biological role, this protein is located at the 30S-50S ribosomal subunit interface and may play a role in the structure and function of the aminoacyl-tRNA binding site. This Burkholderia vietnamiensis (strain G4 / LMG 22486) (Burkholderia cepacia (strain R1808)) protein is Large ribosomal subunit protein bL19.